Here is a 368-residue protein sequence, read N- to C-terminus: tRNA 2-selenouridine synthase (368 aa).

The region spanning Phe12–Glu136 is the Rhodanese domain. The active-site S-selanylcysteine intermediate is Cys95.

It belongs to the SelU family. Monomer.

The catalysed reaction is 5-methylaminomethyl-2-thiouridine(34) in tRNA + selenophosphate + (2E)-geranyl diphosphate + H2O + H(+) = 5-methylaminomethyl-2-selenouridine(34) in tRNA + (2E)-thiogeraniol + phosphate + diphosphate. It carries out the reaction 5-methylaminomethyl-2-thiouridine(34) in tRNA + (2E)-geranyl diphosphate = 5-methylaminomethyl-S-(2E)-geranyl-thiouridine(34) in tRNA + diphosphate. It catalyses the reaction 5-methylaminomethyl-S-(2E)-geranyl-thiouridine(34) in tRNA + selenophosphate + H(+) = 5-methylaminomethyl-2-(Se-phospho)selenouridine(34) in tRNA + (2E)-thiogeraniol. The enzyme catalyses 5-methylaminomethyl-2-(Se-phospho)selenouridine(34) in tRNA + H2O = 5-methylaminomethyl-2-selenouridine(34) in tRNA + phosphate. Involved in the post-transcriptional modification of the uridine at the wobble position (U34) of tRNA(Lys), tRNA(Glu) and tRNA(Gln). Catalyzes the conversion of 2-thiouridine (S2U-RNA) to 2-selenouridine (Se2U-RNA). Acts in a two-step process involving geranylation of 2-thiouridine (S2U) to S-geranyl-2-thiouridine (geS2U) and subsequent selenation of the latter derivative to 2-selenouridine (Se2U) in the tRNA chain. This is tRNA 2-selenouridine synthase from Bordetella bronchiseptica (strain ATCC BAA-588 / NCTC 13252 / RB50) (Alcaligenes bronchisepticus).